Here is a 316-residue protein sequence, read N- to C-terminus: MNFQQLKIIREAARQDYNLTEVANMLFTSQSGVSRHIRELEDELGIEIFVRRGKRLLGMTEPGKALLVIAERILNEASNVRRLADLFTNDTSGVLTIATTHTQARYSLPEVIKAFRELFPEVRLELIQGTPQEIATLLQNGEADIGIASERLSNDPQLVAFPWFRWHHSLLVPHDHPLTQISPLTLESIAKWPLITYRQGITGRSRIDDAFARKGLLADIVLSAQDSDVIKTYVALGLGIGLVAEQSSGEQEEENLIRLDTRHLFDANTVWLGLKRGQLQRNYVWRFLELCNAGLSVEDIKRQVMESSEEEIDYQI.

The 59-residue stretch at 1–59 (MNFQQLKIIREAARQDYNLTEVANMLFTSQSGVSRHIRELEDELGIEIFVRRGKRLLGM) folds into the HTH lysR-type domain. Positions 19 to 38 (LTEVANMLFTSQSGVSRHIR) form a DNA-binding region, H-T-H motif.

This sequence belongs to the LysR transcriptional regulatory family.

In terms of biological role, may be an accessory regulatory protein within the cys regulon. The sequence is that of HTH-type transcriptional regulator cbl (cbl) from Escherichia coli (strain K12).